Reading from the N-terminus, the 697-residue chain is Elongation factor G (697 aa).

Residues 10 to 285 (AKTRNIGIMA…GVIDYLPSPL (276 aa)) form the tr-type G domain. GTP is bound by residues 19–26 (AHIDAGKT), 83–87 (DTPGH), and 137–140 (NKMD).

It belongs to the TRAFAC class translation factor GTPase superfamily. Classic translation factor GTPase family. EF-G/EF-2 subfamily.

Its subcellular location is the cytoplasm. Its function is as follows. Catalyzes the GTP-dependent ribosomal translocation step during translation elongation. During this step, the ribosome changes from the pre-translocational (PRE) to the post-translocational (POST) state as the newly formed A-site-bound peptidyl-tRNA and P-site-bound deacylated tRNA move to the P and E sites, respectively. Catalyzes the coordinated movement of the two tRNA molecules, the mRNA and conformational changes in the ribosome. The sequence is that of Elongation factor G from Lactobacillus acidophilus (strain ATCC 700396 / NCK56 / N2 / NCFM).